Reading from the N-terminus, the 356-residue chain is Glutamine synthetase (356 aa).

The 81-residue stretch at Val-19–Gly-99 folds into the GS beta-grasp domain. Positions Lys-106 to Pro-356 constitute a GS catalytic domain.

Belongs to the glutamine synthetase family. Homooctamer. Found at highest levels in root nodules.

The protein resides in the cytoplasm. It catalyses the reaction L-glutamate + NH4(+) + ATP = L-glutamine + ADP + phosphate + H(+). The protein is Glutamine synthetase (GLN1) of Alnus glutinosa (European alder).